A 371-amino-acid chain; its full sequence is Transmembrane protein 229A (371 aa).

Residues 1–30 (MAGSDVASEGPSPRDGATRRPGATGGLRSQ) form a disordered region. The next 6 helical transmembrane spans lie at 51 to 71 (LPAW…DVLV), 117 to 137 (AFLF…TLAG), 235 to 255 (FLFF…FFNV), 269 to 289 (LWSF…YFHL), 301 to 321 (VPIY…GLRM), and 334 to 354 (LNFM…LSVY).

The protein belongs to the TMEM229 family.

It localises to the membrane. This chain is Transmembrane protein 229A (Tmem229a), found in Mus musculus (Mouse).